Reading from the N-terminus, the 218-residue chain is External core antigen (218 aa).

The first 20 residues, 1-20 (MYLFHLCLVFACVPCPTVQA), serve as a signal peptide directing secretion. The tract at residues 26–28 (GWL) is HBEAG. Over residues 180 to 211 (RRRGGARASRSPRRRTPSPRRRRSQSPRRRRS) the composition is skewed to basic residues. A disordered region spans residues 180–218 (RRRGGARASRSPRRRTPSPRRRRSQSPRRRRSQSPSANC). One copy of the 1; half-length repeat lies at 190–196 (SPRRRTP). Positions 190 to 212 (SPRRRTPSPRRRRSQSPRRRRSQ) are 3 X 8 AA repeats of S-P-R-R-R-R-S-Q. The propeptide occupies 190–218 (SPRRRTPSPRRRRSQSPRRRRSQSPSANC). Repeat copies occupy residues 197–204 (SPRRRRSQ) and 205–212 (SPRRRRSQ).

The protein belongs to the orthohepadnavirus precore antigen family. As to quaternary structure, homodimerizes. Post-translationally, phosphorylated. In terms of processing, cleaved by host furin.

The protein resides in the secreted. It is found in the host nucleus. Its function is as follows. May regulate immune response to the intracellular capsid in acting as a T-cell tolerogen, by having an immunoregulatory effect which prevents destruction of infected cells by cytotoxic T-cells. This immune regulation may predispose to chronicity during perinatal infections and prevent severe liver injury during adult infections. In Woodchuck hepatitis B virus (isolate 1) (WHV), this protein is External core antigen.